The following is a 527-amino-acid chain: Glucose-6-phosphate isomerase (527 aa).

Catalysis depends on glutamate 323, which acts as the Proton donor. Active-site residues include histidine 352 and lysine 454.

It belongs to the GPI family.

The protein localises to the cytoplasm. It carries out the reaction alpha-D-glucose 6-phosphate = beta-D-fructose 6-phosphate. Its pathway is carbohydrate biosynthesis; gluconeogenesis. It functions in the pathway carbohydrate degradation; glycolysis; D-glyceraldehyde 3-phosphate and glycerone phosphate from D-glucose: step 2/4. In terms of biological role, catalyzes the reversible isomerization of glucose-6-phosphate to fructose-6-phosphate. The protein is Glucose-6-phosphate isomerase of Prochlorococcus marinus (strain MIT 9301).